The chain runs to 88 residues: Phosphocarrier protein HPr (88 aa).

One can recognise an HPr domain in the interval 2–88 (AQKTFKVTAD…ETMKSEGLGE (87 aa)). Residue Ser-12 is modified to Phosphoserine. His-15 functions as the Pros-phosphohistidine intermediate; alternate in the catalytic mechanism. Position 15 is a tele-phosphohistidine; alternate (His-15). Residue Ser-46 is modified to Phosphoserine; by HPrK/P.

The protein belongs to the HPr family. Post-translationally, phosphorylated during sporulation.

Its subcellular location is the cytoplasm. Phosphorylation on Ser-46 inhibits the phosphoryl transfer from enzyme I to HPr. General (non sugar-specific) component of the phosphoenolpyruvate-dependent sugar phosphotransferase system (sugar PTS). This major carbohydrate active-transport system catalyzes the phosphorylation of incoming sugar substrates concomitantly with their translocation across the cell membrane. The phosphoryl group from phosphoenolpyruvate (PEP) is transferred to the phosphoryl carrier protein HPr by enzyme I. Phospho-HPr then transfers it to the PTS EIIA domain. In terms of biological role, P-Ser-HPr interacts with the catabolite control protein A (CcpA), forming a complex that binds to DNA at the catabolite response elements cre, operator sites preceding a large number of catabolite-regulated genes. Thus, P-Ser-HPr is a corepressor in carbon catabolite repression (CCR), a mechanism that allows bacteria to coordinate and optimize the utilization of available carbon sources. P-Ser-HPr also plays a role in inducer exclusion, in which it probably interacts with several non-PTS permeases and inhibits their transport activity. This Bacillus subtilis (strain 168) protein is Phosphocarrier protein HPr (ptsH).